The chain runs to 539 residues: Phosphoenolpyruvate carboxykinase (ATP) (539 aa).

Substrate contacts are provided by arginine 64, tyrosine 206, and lysine 212. Residues lysine 212, histidine 231, and 247–255 contribute to the ATP site; that span reads GLSGTGKTT. Positions 212 and 231 each coordinate Mn(2+). Aspartate 268 is a Mn(2+) binding site. Residues glutamate 296, arginine 332, 448–449, and threonine 454 each bind ATP; that span reads RI. Arginine 332 is a binding site for substrate.

Belongs to the phosphoenolpyruvate carboxykinase (ATP) family. In terms of assembly, monomer. Mn(2+) serves as cofactor.

It localises to the cytoplasm. It carries out the reaction oxaloacetate + ATP = phosphoenolpyruvate + ADP + CO2. It participates in carbohydrate biosynthesis; gluconeogenesis. In terms of biological role, involved in the gluconeogenesis. Catalyzes the conversion of oxaloacetate (OAA) to phosphoenolpyruvate (PEP) through direct phosphoryl transfer between the nucleoside triphosphate and OAA. This chain is Phosphoenolpyruvate carboxykinase (ATP), found in Cronobacter sakazakii (strain ATCC BAA-894) (Enterobacter sakazakii).